The sequence spans 336 residues: Holliday junction branch migration complex subunit RuvB (336 aa).

The large ATPase domain (RuvB-L) stretch occupies residues 4 to 184 (ADRLISAGTT…FGIVQRLEFY (181 aa)). Residues isoleucine 23, arginine 24, glycine 65, lysine 68, threonine 69, threonine 70, 131-133 (EDY), arginine 174, tyrosine 184, and arginine 221 contribute to the ATP site. Threonine 69 serves as a coordination point for Mg(2+). Positions 185–255 (QVPDLQYIVS…IAAQALDMLN (71 aa)) are small ATPAse domain (RuvB-S). The head domain (RuvB-H) stretch occupies residues 258–336 (AEGFDYMDRK…HFGITPPEMP (79 aa)). Residues arginine 294, arginine 313, and arginine 318 each coordinate DNA.

Belongs to the RuvB family. In terms of assembly, homohexamer. Forms an RuvA(8)-RuvB(12)-Holliday junction (HJ) complex. HJ DNA is sandwiched between 2 RuvA tetramers; dsDNA enters through RuvA and exits via RuvB. An RuvB hexamer assembles on each DNA strand where it exits the tetramer. Each RuvB hexamer is contacted by two RuvA subunits (via domain III) on 2 adjacent RuvB subunits; this complex drives branch migration. In the full resolvosome a probable DNA-RuvA(4)-RuvB(12)-RuvC(2) complex forms which resolves the HJ.

It localises to the cytoplasm. The catalysed reaction is ATP + H2O = ADP + phosphate + H(+). Functionally, the RuvA-RuvB-RuvC complex processes Holliday junction (HJ) DNA during genetic recombination and DNA repair, while the RuvA-RuvB complex plays an important role in the rescue of blocked DNA replication forks via replication fork reversal (RFR). RuvA specifically binds to HJ cruciform DNA, conferring on it an open structure. The RuvB hexamer acts as an ATP-dependent pump, pulling dsDNA into and through the RuvAB complex. RuvB forms 2 homohexamers on either side of HJ DNA bound by 1 or 2 RuvA tetramers; 4 subunits per hexamer contact DNA at a time. Coordinated motions by a converter formed by DNA-disengaged RuvB subunits stimulates ATP hydrolysis and nucleotide exchange. Immobilization of the converter enables RuvB to convert the ATP-contained energy into a lever motion, pulling 2 nucleotides of DNA out of the RuvA tetramer per ATP hydrolyzed, thus driving DNA branch migration. The RuvB motors rotate together with the DNA substrate, which together with the progressing nucleotide cycle form the mechanistic basis for DNA recombination by continuous HJ branch migration. Branch migration allows RuvC to scan DNA until it finds its consensus sequence, where it cleaves and resolves cruciform DNA. This is Holliday junction branch migration complex subunit RuvB from Escherichia coli O17:K52:H18 (strain UMN026 / ExPEC).